A 104-amino-acid chain; its full sequence is U20-lycotoxin-Ls1c (104 aa).

A signal peptide spans 1 to 30 (MFSTSDQVSKMNSRILSALLILGIATCVIA). The 46-residue stretch at 31–76 (GGFCPKSRHPQCDLSYKINDCCAQSDCRVGSVCCVEGCGNVCRAES) folds into the WAP domain. 5 disulfide bridges follow: cysteine 34-cysteine 64, cysteine 42-cysteine 68, cysteine 51-cysteine 63, cysteine 52-cysteine 90, and cysteine 57-cysteine 72.

This sequence belongs to the venom protein 11 family. 02 (wap-2) subfamily. Post-translationally, contains 5 disulfide bonds. Expressed by the venom gland.

Its subcellular location is the secreted. Functionally, has antibacterial activity. The polypeptide is U20-lycotoxin-Ls1c (Lycosa singoriensis (Wolf spider)).